The following is a 461-amino-acid chain: Bifunctional protein GlmU (461 aa).

Positions 1-229 (MEKYVVVLAA…FSESLGVNDR (229 aa)) are pyrophosphorylase. Residues 8-11 (LAAG), Lys22, Gln72, and 77-78 (GT) contribute to the UDP-N-acetyl-alpha-D-glucosamine site. Residue Asp102 coordinates Mg(2+). UDP-N-acetyl-alpha-D-glucosamine-binding residues include Gly139, Glu154, Asn169, and Asn227. Asn227 contributes to the Mg(2+) binding site. The linker stretch occupies residues 230-250 (IALAEATRIMQRRINEGHMRD). The segment at 251–461 (GVTFIDPATA…LPLSEDEEWK (211 aa)) is N-acetyltransferase. Residues Arg332 and Lys350 each contribute to the UDP-N-acetyl-alpha-D-glucosamine site. His362 (proton acceptor) is an active-site residue. Positions 365 and 376 each coordinate UDP-N-acetyl-alpha-D-glucosamine. Positions 422 and 439 each coordinate acetyl-CoA.

In the N-terminal section; belongs to the N-acetylglucosamine-1-phosphate uridyltransferase family. The protein in the C-terminal section; belongs to the transferase hexapeptide repeat family. In terms of assembly, homotrimer. The cofactor is Mg(2+).

It is found in the cytoplasm. It catalyses the reaction alpha-D-glucosamine 1-phosphate + acetyl-CoA = N-acetyl-alpha-D-glucosamine 1-phosphate + CoA + H(+). The catalysed reaction is N-acetyl-alpha-D-glucosamine 1-phosphate + UTP + H(+) = UDP-N-acetyl-alpha-D-glucosamine + diphosphate. It functions in the pathway nucleotide-sugar biosynthesis; UDP-N-acetyl-alpha-D-glucosamine biosynthesis; N-acetyl-alpha-D-glucosamine 1-phosphate from alpha-D-glucosamine 6-phosphate (route II): step 2/2. The protein operates within nucleotide-sugar biosynthesis; UDP-N-acetyl-alpha-D-glucosamine biosynthesis; UDP-N-acetyl-alpha-D-glucosamine from N-acetyl-alpha-D-glucosamine 1-phosphate: step 1/1. Its pathway is bacterial outer membrane biogenesis; LPS lipid A biosynthesis. Functionally, catalyzes the last two sequential reactions in the de novo biosynthetic pathway for UDP-N-acetylglucosamine (UDP-GlcNAc). The C-terminal domain catalyzes the transfer of acetyl group from acetyl coenzyme A to glucosamine-1-phosphate (GlcN-1-P) to produce N-acetylglucosamine-1-phosphate (GlcNAc-1-P), which is converted into UDP-GlcNAc by the transfer of uridine 5-monophosphate (from uridine 5-triphosphate), a reaction catalyzed by the N-terminal domain. The protein is Bifunctional protein GlmU of Lactobacillus delbrueckii subsp. bulgaricus (strain ATCC BAA-365 / Lb-18).